Here is a 277-residue protein sequence, read N- to C-terminus: Diaminopimelate epimerase (277 aa).

The substrate site is built by asparagine 13, glutamine 46, and asparagine 66. The active-site Proton donor is the cysteine 75. Substrate contacts are provided by residues 76 to 77 (GN), asparagine 160, asparagine 193, and 211 to 212 (ER). The active-site Proton acceptor is cysteine 220. A substrate-binding site is contributed by 221–222 (GS).

The protein belongs to the diaminopimelate epimerase family. As to quaternary structure, homodimer.

The protein resides in the cytoplasm. It carries out the reaction (2S,6S)-2,6-diaminopimelate = meso-2,6-diaminopimelate. Its pathway is amino-acid biosynthesis; L-lysine biosynthesis via DAP pathway; DL-2,6-diaminopimelate from LL-2,6-diaminopimelate: step 1/1. Its function is as follows. Catalyzes the stereoinversion of LL-2,6-diaminopimelate (L,L-DAP) to meso-diaminopimelate (meso-DAP), a precursor of L-lysine and an essential component of the bacterial peptidoglycan. The protein is Diaminopimelate epimerase of Legionella pneumophila (strain Paris).